We begin with the raw amino-acid sequence, 259 residues long: Hydroxyacylglutathione hydrolase (259 aa).

7 residues coordinate Zn(2+): His56, His58, Asp60, His61, His112, Asp133, and His171.

The protein belongs to the metallo-beta-lactamase superfamily. Glyoxalase II family. In terms of assembly, monomer. Requires Zn(2+) as cofactor.

The catalysed reaction is an S-(2-hydroxyacyl)glutathione + H2O = a 2-hydroxy carboxylate + glutathione + H(+). The protein operates within secondary metabolite metabolism; methylglyoxal degradation; (R)-lactate from methylglyoxal: step 2/2. In terms of biological role, thiolesterase that catalyzes the hydrolysis of S-D-lactoyl-glutathione to form glutathione and D-lactic acid. This chain is Hydroxyacylglutathione hydrolase, found in Pseudomonas entomophila (strain L48).